A 72-amino-acid polypeptide reads, in one-letter code: Gas vesicle protein A (72 aa).

This sequence belongs to the gas vesicle GvpA family. In terms of assembly, the gas vesicle shell is 2 nm thick and consists of a single layer of this protein. It forms helical ribs nearly perpendicular to the long axis of the vesicle.

It is found in the gas vesicle shell. Its function is as follows. Gas vesicles are hollow, gas filled proteinaceous nanostructures found in some microorganisms. During planktonic growth they allow positioning of the organism at a favorable depth for light or nutrient acquisition. GvpA forms the protein shell. This chain is Gas vesicle protein A, found in Geotalea uraniireducens (strain Rf4) (Geobacter uraniireducens).